Here is a 396-residue protein sequence, read N- to C-terminus: Anticodon nuclease (396 aa).

In terms of biological role, anticodon endonuclease (ACNase) that triggers the cleavage ligation of tRNA(Lys). It is activated by T4 stp protein and masked by the prrD protein (the endonuclease subunit of EcoprrI). The prr locus restricts phage T4 mutants lacking polynucleotide kinase or RNA ligase; T4 mutants lacking these genes manifest a T4-induced anticodon nuclease (ACNase). It is thought that Stp and other T4-encoded ACNase factors counteract the masking agents, thus activating the latent ACNase. In Escherichia coli, this protein is Anticodon nuclease.